The chain runs to 475 residues: E3 ubiquitin-protein ligase TRIM62 (475 aa).

The RING-type zinc finger occupies 11-54 (CSICLSIYQDPVSLGCEHYFCRRCITEHWVRQEAQGARDCPECR). The B box-type zinc finger occupies 88–128 (RAARPCQAHDKVKLFCLTDRALLCFFCDEPALHEQHQVTGI). Residues cysteine 93, histidine 96, cysteine 114, and histidine 120 each contribute to the Zn(2+) site. Positions 121–241 (EQHQVTGIDD…LQERLAETDR (121 aa)) form a coiled coil. Positions 277 to 475 (PLQYTIWKSL…QPLRINTVRI (199 aa)) constitute a B30.2/SPRY domain.

Belongs to the TRIM/RBCC family. Interacts with the ubiquitin-conjugating enzyme, UBE2D2. In terms of processing, polyubiquitinated, autoubiquitinated in the presence of UBE2D2.

It localises to the cytoplasm. The enzyme catalyses S-ubiquitinyl-[E2 ubiquitin-conjugating enzyme]-L-cysteine + [acceptor protein]-L-lysine = [E2 ubiquitin-conjugating enzyme]-L-cysteine + N(6)-ubiquitinyl-[acceptor protein]-L-lysine.. It functions in the pathway protein modification; protein ubiquitination. In terms of biological role, E3 ubiquitin ligase that plays a role in antifungal immunity by mediating 'Lys-27'-linked ubiquitination of CARD9 downstream of C-type lectin receptors; leading to CARD9 activation, followed by activation of NF-kappa-B and MAP kinase p38 pathways. E3 ubiquitin ligase activity is dependent on E2 ubiquitin-conjugating enzyme UBE2D2. The sequence is that of E3 ubiquitin-protein ligase TRIM62 from Mus musculus (Mouse).